We begin with the raw amino-acid sequence, 604 residues long: UvrABC system protein C (604 aa).

The GIY-YIG domain maps to 15–92 (DLPGCYLMKN…IQKHQPYFNI (78 aa)). Residues 197-232 (ETVKKQLTKRMDQAAADLEFERAAELRDQLNYIEMT) enclose the UVR domain.

It belongs to the UvrC family. As to quaternary structure, interacts with UvrB in an incision complex.

Its subcellular location is the cytoplasm. Functionally, the UvrABC repair system catalyzes the recognition and processing of DNA lesions. UvrC both incises the 5' and 3' sides of the lesion. The N-terminal half is responsible for the 3' incision and the C-terminal half is responsible for the 5' incision. This chain is UvrABC system protein C, found in Lactiplantibacillus plantarum (strain ATCC BAA-793 / NCIMB 8826 / WCFS1) (Lactobacillus plantarum).